Reading from the N-terminus, the 2139-residue chain is Voltage-dependent L-type calcium channel subunit alpha-1C (2139 aa).

A disordered region spans residues 1-20 (MVNENTRMYVPEENHQGSNY). Over 1-124 (MVNENTRMYV…RACISIVEWK (124 aa)) the chain is Cytoplasmic. Residues 47 to 68 (GAALSWQAAIDAARQAKLMGSA) form a calmodulin-binding region. The interval 73–98 (ISTVSSTQRKRQQYGKPKKQGGTTAT) is disordered. Over residues 80–91 (QRKRQQYGKPKK) the composition is skewed to basic residues. An I repeat occupies 111 to 408 (NPIRRACISI…LVLGVLSGEF (298 aa)). A helical membrane pass occupies residues 125-143 (PFEIIILLTIFANCVALAI). Topologically, residues 144–158 (YIPFPEDDSNATNSN) are extracellular. N-linked (GlcNAc...) asparagine glycosylation occurs at N153. Residues 159–179 (LERVEYLFLIIFTVEAFLKVI) traverse the membrane as a helical segment. The Cytoplasmic segment spans residues 180-188 (AYGLLFHPN). Residues 189–209 (AYLRNGWNLLDFIIVVVGLFS) form a helical membrane-spanning segment. At 210–232 (AILEQATKADGANALGGKGAGFD) the chain is on the extracellular side. A helical membrane pass occupies residues 233 to 251 (VKALRAFRVLRPLRLVSGV). Topologically, residues 252–268 (PSLQVVLNSIIKAMVPL) are cytoplasmic. A helical transmembrane segment spans residues 269–290 (LHIALLVLFVIIIYAIIGLELF). Topologically, residues 291-350 (MGKMHKTCYNQEGIIDVPAEEDPSPCALETGHGRQCQNGTVCKPGWDGPKHGITNFDNFA) are extracellular. 2 disulfides stabilise this stretch: C298–C326 and C316–C332. N328 is a glycosylation site (N-linked (GlcNAc...) asparagine). The segment at residues 351 to 372 (FAMLTVFQCITMEGWTDVLYWM) is an intramembrane region (pore-forming). Positions 361–364 (TMEG) match the Selectivity filter of repeat I motif. A Ca(2+)-binding site is contributed by E363. Residues 373–380 (QDAMGYEL) lie on the Extracellular side of the membrane. A helical membrane pass occupies residues 381-401 (PWVYFVSLVIFGSFFVLNLVL). The Cytoplasmic portion of the chain corresponds to 402–524 (GVLSGEFSKE…RKCRAAVKSN (123 aa)). The segment at 428-445 (QQLEEDLKGYLDWITQAE) is AID/alpha-interaction domain; mediates interaction with the beta subunit. Positions 449 to 481 (PENEDEGMDEDKPRNMSMPTSETESVNTENVAG) are disordered. A compositionally biased stretch (polar residues) spans 465–478 (SMPTSETESVNTEN). Phosphoserine is present on S469. T476 is subject to Phosphothreonine. The II repeat unit spans residues 510-756 (NRFCRRKCRA…VFLAIAVDNL (247 aa)). Residues 525–543 (VFYWLVIFLVFLNTLTIAS) traverse the membrane as a helical segment. Residues 544 to 554 (EHYNQPHWLTE) are Extracellular-facing. Residues 555–575 (VQDTANKALLALFTAEMLLKM) traverse the membrane as a helical segment. Residues 576-586 (YSLGLQAYFVS) are Cytoplasmic-facing. A helical transmembrane segment spans residues 587–606 (LFNRFDCFIVCGGILETILV). Residues 607 to 615 (ETKIMSPLG) lie on the Extracellular side of the membrane. Residues 616–634 (ISVLRCVRLLRIFKITRYW) form a helical membrane-spanning segment. At 635 to 653 (NSLSNLVASLLNSVRSIAS) the chain is on the cytoplasmic side. The chain crosses the membrane as a helical span at residues 654-673 (LLLLLFLFIIIFSLLGMQLF). The Extracellular segment spans residues 674-693 (GGKFNFDEMQTRRSTFDNFP). Positions 694 to 715 (QSLLTVFQILTGEDWNSVMYDG) form an intramembrane region, pore-forming. Residues 704–707 (TGED) carry the Selectivity filter of repeat II motif. Position 706 (E706) interacts with Ca(2+). The Extracellular segment spans residues 716 to 725 (IMAYGGPSFP). Residues 726–745 (GMLVCIYFIILFICGNYILL) form a helical membrane-spanning segment. Over 746-900 (NVFLAIAVDN…LQCHRIVNDT (155 aa)) the chain is Cytoplasmic. The segment at 764–861 (SAQKEEEEEK…EMPVGPRPRP (98 aa)) is disordered. The segment covering 783 to 806 (SPEKKQEVMEKPAVEESKEEKIEL) has biased composition (basic and acidic residues). 2 positions are modified to phosphoserine: S808 and S815. The interaction with STAC2 stretch occupies residues 829–876 (SENEDKSPHSNPDTAGEEDEEEPEMPVGPRPRPLSELHLKEKAVPMPE). Over residues 843-852 (AGEEDEEEPE) the composition is skewed to acidic residues. The stretch at 887 to 1169 (NRFRLQCHRI…IFVGFVIVTF (283 aa)) is one III repeat. The chain crosses the membrane as a helical span at residues 901 to 919 (IFTNLILFFILLSSISLAA). Residues 920–931 (EDPVQHTSFRNH) are Extracellular-facing. A helical membrane pass occupies residues 932 to 951 (ILGNADYVFTSIFTLEIILK). Residues 952–967 (MTAYGAFLHKGSFCRN) lie on the Cytoplasmic side of the membrane. A helical membrane pass occupies residues 968 to 986 (YFNILDLLVVSVSLISFGI). Over 987–993 (QSSAINV) the chain is Extracellular. A helical transmembrane segment spans residues 994-1012 (VKILRVLRVLRPLRAINRA). The Cytoplasmic segment spans residues 1013–1031 (KGLKHVVQCVFVAIRTIGN). Residues 1032 to 1051 (IVIVTTLLQFMFACIGVQLF) traverse the membrane as a helical segment. Over 1052 to 1101 (KGKLYTCSDSSKQTEAECKGNYITYKDGEVDHPIIQPRSWENSKFDFDNV) the chain is Extracellular. A disulfide bond links C1058 and C1069. The interval 1089-1178 (RSWENSKFDF…FQEQGEQEYK (90 aa)) is dihydropyridine binding. Positions 1102–1122 (LAAMMALFTVSTFEGWPELLY) form an intramembrane region, pore-forming. The short motif at 1113–1116 (TFEG) is the Selectivity filter of repeat III element. E1115 contributes to the Ca(2+) binding site. The Extracellular portion of the chain corresponds to 1123 to 1139 (RSIDSHTEDKGPIYNYR). A helical transmembrane segment spans residues 1140-1161 (VEISIFFIIYIIIIAFFMMNIF). Residues 1162-1219 (VGFVIVTFQEQGEQEYKNCELDKNQRQCVEYALKARPLRRYIPKNQHQYKVWYVVNST) lie on the Cytoplasmic side of the membrane. Residues 1206 to 1479 (NQHQYKVWYV…LFVAVIMDNF (274 aa)) form an IV repeat. Residues 1220–1241 (YFEYLMFVLILLNTICLAMQHY) form a helical membrane-spanning segment. Residues 1242–1249 (GQSCLFKI) are Extracellular-facing. A helical transmembrane segment spans residues 1250 to 1271 (AMNILNMLFTGLFTVEMILKLI). The Cytoplasmic segment spans residues 1272-1281 (AFKPKGYFSD). A helical transmembrane segment spans residues 1282-1301 (PWNVFDFLIVIGSIIDVILS). At 1302-1324 (ETNPAEHTQCSPSMSAEENSRIS) the chain is on the extracellular side. A helical transmembrane segment spans residues 1325 to 1343 (ITFFRLFRVMRLVKLLSRG). The Cytoplasmic segment spans residues 1344–1361 (EGIRTLLWTFIKSFQALP). A helical membrane pass occupies residues 1362-1382 (YVALLIVMLFFIYAVIGMQVF). The Extracellular segment spans residues 1383-1404 (GKIALNDTTEINRNNNFQTFPQ). An N-linked (GlcNAc...) asparagine glycan is attached at N1388. The pore-forming intramembrane region spans 1405 to 1423 (AVLLLFRCATGEAWQDIML). The Selectivity filter of repeat IV signature appears at 1414 to 1417 (TGEA). Residues 1424 to 1451 (ACMPGKKCAPESEPSNSTEGETPCGSSF) lie on the Extracellular side of the membrane. The segment at 1430 to 1498 (KCAPESEPSN…LGPHHLDEFK (69 aa)) is dihydropyridine binding. Residues C1431 and C1447 are joined by a disulfide bond. N1439 carries an N-linked (GlcNAc...) asparagine glycan. The interval 1444–1486 (ETPCGSSFAVFYFISFYMLCAFLIINLFVAVIMDNFDYLTRDW) is phenylalkylamine binding. A helical membrane pass occupies residues 1452-1476 (AVFYFISFYMLCAFLIINLFVAVIM). The Cytoplasmic portion of the chain corresponds to 1477 to 2139 (DNFDYLTRDW…ADSRSYVSNL (663 aa)). Residues 1611–1638 (DEVTVGKFYATFLIQEYFRKFKKRKEQG) form an important for interaction with STAC1, STAC2 and STAC3 region. A calmodulin-binding region spans residues 1611-1644 (DEVTVGKFYATFLIQEYFRKFKKRKEQGLVGKPS). Residues 1617–1637 (KFYATFLIQEYFRKFKKRKEQ) are calmodulin-binding IQ region. The segment at 1651-1670 (LQAGLRTLHDIGPEIRRAIS) is important for localization in at the junctional membrane. 2 positions are modified to phosphoserine: S1670 and S1691. 2 stretches are compositionally biased toward polar residues: residues 1732-1741 (KTGNNQADTE) and 1751-1763 (STFTPSSYSSTGS). Residues 1732 to 1773 (KTGNNQADTESPSHEKLVDSTFTPSSYSSTGSNANINNANNT) are disordered. Over residues 1764–1773 (NANINNANNT) the composition is skewed to low complexity. S1897 carries the post-translational modification Phosphoserine; by PKA. The tract at residues 1940-1966 (RSHSPTTFPRPCPTPPVTPGSRGRPLR) is disordered. A compositionally biased stretch (pro residues) spans 1947–1957 (FPRPCPTPPVT).

The protein belongs to the calcium channel alpha-1 subunit (TC 1.A.1.11) family. CACNA1C subfamily. Component of a calcium channel complex consisting of a pore-forming alpha subunit (CACNA1C) and ancillary beta, gamma and delta subunits. The channel complex contains alpha, beta, gamma and delta subunits in a 1:1:1:1 ratio, i.e. it contains only one of each type of subunit. CACNA1C channel activity is modulated by ancillary subunits, such as CACNB1, CACNB2, CACNB3, CACNA2D1 and CACNA2D4. Interacts with the gamma subunits CACNG4, CACNG6, CACNG7 and CACNG8. Interacts with CACNB1. Interacts with CACNB2. Identified in a complex with CACNA2D4 and CACNB3. Interacts with CACNB3. Interacts with CACNA2D1. Interacts with CACNA2D4. Interacts with CALM1. Interacts (via the N-terminus and the C-terminal C and IQ motifs) with CABP1; this inhibits Ca(2+)-dependent channel inactivation. The binding via the C motif is calcium independent whereas the binding via IQ requires the presence of calcium and is mutually exclusive with calmodulin binding. The binding to the cytoplasmic N-terminal domain is calcium independent but is essential for the channel modulation. Interacts (via C-terminal CDB motif) with CABP5; in a calcium-dependent manner. Interacts with CIB1; the interaction increases upon cardiomyocytes hypertrophy. Interacts with STAC2 and STAC3; this inhibits channel inactivation. In terms of processing, phosphorylation by PKA at Ser-1897 activates the channel. Elevated levels of blood glucose lead to increased phosphorylation by PKA. In terms of tissue distribution, detected in embryonic heart. Detected in retina in rod bipolar cells. Detected in tibialis artery (at protein level). Detected in smooth muscle cells from tibialis artery and in mesenteric artery. High expression in heart, followed by brain and spinal cord.

The protein localises to the cell membrane. The protein resides in the sarcolemma. It is found in the perikaryon. It localises to the postsynaptic density membrane. Its subcellular location is the cell projection. The protein localises to the dendrite. The protein resides in the T-tubule. It carries out the reaction Ca(2+)(in) = Ca(2+)(out). With respect to regulation, inhibited by dihydropyridines (DHP), such as isradipine. Inhibited by nifedipine. Channel activity is regulated by Ca(2+) and calmodulin. Binding of STAC1, STAC2 or STAC3 to a region that overlaps with the calmodulin binding site inhibits channel inactivation by Ca(2+) and calmodulin. Binding of calmodulin or CABP1 at the same regulatory sites results in opposite effects on the channel function. Shear stress and pressure increases calcium channel activity. In terms of biological role, pore-forming, alpha-1C subunit of the voltage-gated calcium channel that gives rise to L-type calcium currents. Mediates influx of calcium ions into the cytoplasm, and thereby triggers calcium release from the sarcoplasm. Plays an important role in excitation-contraction coupling in the heart. Required for normal heart development and normal regulation of heart rhythm. Required for normal contraction of smooth muscle cells in blood vessels and in the intestine. Essential for normal blood pressure regulation via its role in the contraction of arterial smooth muscle cells. Long-lasting (L-type) calcium channels belong to the 'high-voltage activated' (HVA) group. The sequence is that of Voltage-dependent L-type calcium channel subunit alpha-1C (Cacna1c) from Mus musculus (Mouse).